Reading from the N-terminus, the 220-residue chain is Orotate phosphoribosyltransferase (220 aa).

Lys26 is a binding site for 5-phospho-alpha-D-ribose 1-diphosphate. Phe34–Phe35 is a binding site for orotate. Residues Tyr72–Lys73, Arg101, Lys102, Lys105, His107, and Asp126–Ser134 each bind 5-phospho-alpha-D-ribose 1-diphosphate. Residues Thr130 and Arg158 each contribute to the orotate site.

The protein belongs to the purine/pyrimidine phosphoribosyltransferase family. PyrE subfamily. In terms of assembly, homodimer. Requires Mg(2+) as cofactor.

The catalysed reaction is orotidine 5'-phosphate + diphosphate = orotate + 5-phospho-alpha-D-ribose 1-diphosphate. The protein operates within pyrimidine metabolism; UMP biosynthesis via de novo pathway; UMP from orotate: step 1/2. In terms of biological role, catalyzes the transfer of a ribosyl phosphate group from 5-phosphoribose 1-diphosphate to orotate, leading to the formation of orotidine monophosphate (OMP). The sequence is that of Orotate phosphoribosyltransferase from Bordetella avium (strain 197N).